We begin with the raw amino-acid sequence, 412 residues long: Multidrug resistance protein MdtA (412 aa).

An N-terminal signal peptide occupies residues Met-1 to Ala-21. Disordered regions lie at residues Gly-33–Arg-53 and Val-389–Ser-412.

It belongs to the membrane fusion protein (MFP) (TC 8.A.1) family. As to quaternary structure, part of a tripartite efflux system composed of MdtA, MdtB and MdtC.

The protein resides in the cell inner membrane. This Klebsiella pneumoniae subsp. pneumoniae (strain ATCC 700721 / MGH 78578) protein is Multidrug resistance protein MdtA.